An 82-amino-acid chain; its full sequence is ATP synthase subunit c, chloroplastic (82 aa).

2 helical membrane passes run 7–27 and 57–77; these read AASVVASGLSVGLAAIGPGIG and LAFMESLTIYGLVVALALLFA.

The protein belongs to the ATPase C chain family. As to quaternary structure, F-type ATPases have 2 components, F(1) - the catalytic core - and F(0) - the membrane proton channel. F(1) has five subunits: alpha(3), beta(3), gamma(1), delta(1), epsilon(1). F(0) has four main subunits: a(1), b(1), b'(1) and c(10-14). The alpha and beta chains form an alternating ring which encloses part of the gamma chain. F(1) is attached to F(0) by a central stalk formed by the gamma and epsilon chains, while a peripheral stalk is formed by the delta, b and b' chains.

The protein localises to the plastid. The protein resides in the chloroplast thylakoid membrane. Its function is as follows. F(1)F(0) ATP synthase produces ATP from ADP in the presence of a proton or sodium gradient. F-type ATPases consist of two structural domains, F(1) containing the extramembraneous catalytic core and F(0) containing the membrane proton channel, linked together by a central stalk and a peripheral stalk. During catalysis, ATP synthesis in the catalytic domain of F(1) is coupled via a rotary mechanism of the central stalk subunits to proton translocation. Functionally, key component of the F(0) channel; it plays a direct role in translocation across the membrane. A homomeric c-ring of between 10-14 subunits forms the central stalk rotor element with the F(1) delta and epsilon subunits. The protein is ATP synthase subunit c, chloroplastic of Rhodomonas salina (Cryptomonas salina).